The chain runs to 471 residues: MTIEAEVLAYKVADMSLAEWGRKEIDIAEKEMPGLMATRKKYAGQKPLKGARIAGSLHMTIQTAVLIETLVELGADVRWASCNIFSTQDHAAAAIAKAGIPVFAWKGETLDEYWWCTRQILEFEGGKGPHLIVDDGGDATLMIHLGYKIEIDPSLLDKTPGNIEEKALFQQLREVYEEDSQRWHNVAAEMKGVSEETTTGVHRLYQMMEKEELLFPAINVNDSVTKSKFDNLYGCRESLADGIKRATDVMVAGKVVVVLGYGDVGKGSARSMRAYGARVIVTEIDPICALQAAMEGYEVNTMDEAVTEGNIFVTTTGNKDVITLEHMKKMKGEAIICNIGHFDNEIQVEPLNNYAGATKLNIKPQVDKYTFEDGHAIYLLAEGRLVNLGCATGHPSFVMSNSFTNQTLAQLELWTRDYAIDVYRLPKQLDEEVARLHLEQLGVKLTTLTNEQAEYIGVPLEGPYKPEHYRY.

Residues Thr60, Asp135, and Glu196 each contribute to the substrate site. Position 197-199 (197-199 (TTT)) interacts with NAD(+). Residues Lys226 and Asp230 each contribute to the substrate site. NAD(+) is bound by residues Asn231, 260–265 (GYGDVG), Glu283, Asn318, 339–341 (IGH), and Asn387.

It belongs to the adenosylhomocysteinase family. Requires NAD(+) as cofactor.

The protein localises to the cytoplasm. It carries out the reaction S-adenosyl-L-homocysteine + H2O = L-homocysteine + adenosine. The protein operates within amino-acid biosynthesis; L-homocysteine biosynthesis; L-homocysteine from S-adenosyl-L-homocysteine: step 1/1. In terms of biological role, may play a key role in the regulation of the intracellular concentration of adenosylhomocysteine. The chain is Adenosylhomocysteinase from Chlorobium phaeobacteroides (strain DSM 266 / SMG 266 / 2430).